The sequence spans 433 residues: Gamma-glutamyl phosphate reductase (433 aa).

This sequence belongs to the gamma-glutamyl phosphate reductase family.

The protein resides in the cytoplasm. It carries out the reaction L-glutamate 5-semialdehyde + phosphate + NADP(+) = L-glutamyl 5-phosphate + NADPH + H(+). Its pathway is amino-acid biosynthesis; L-proline biosynthesis; L-glutamate 5-semialdehyde from L-glutamate: step 2/2. In terms of biological role, catalyzes the NADPH-dependent reduction of L-glutamate 5-phosphate into L-glutamate 5-semialdehyde and phosphate. The product spontaneously undergoes cyclization to form 1-pyrroline-5-carboxylate. The chain is Gamma-glutamyl phosphate reductase from Rhodopseudomonas palustris (strain BisB18).